Here is a 41-residue protein sequence, read N- to C-terminus: Mu-conotoxin pn4c (41 aa).

A propeptide spanning residues 1 to 24 is cleaved from the precursor; it reads DQPAERMQDDISSEHHPFFDPVKR.

The protein belongs to the conotoxin M superfamily. Contains 3 disulfide bonds. They are not added, since framework IV presents two different connectivities (I-V, II-III, IV-VI and I-III, II-V, IV-VI). Expressed by the venom duct.

Its subcellular location is the secreted. Its function is as follows. Mu-conotoxins block voltage-gated sodium channels (Nav). Blocks reversibly sodium channels in molluskan neurons, but has no effect on sodium currents in bovine chromaffin cells or in rat brain synaptosomes. Induces paralysis in mollusks (C.retripictus). This Conus pennaceus (Feathered cone) protein is Mu-conotoxin pn4c.